The primary structure comprises 469 residues: Aspartyl/glutamyl-tRNA(Asn/Gln) amidotransferase subunit B (469 aa).

Belongs to the GatB/GatE family. GatB subfamily. Heterotrimer of A, B and C subunits.

It catalyses the reaction L-glutamyl-tRNA(Gln) + L-glutamine + ATP + H2O = L-glutaminyl-tRNA(Gln) + L-glutamate + ADP + phosphate + H(+). The catalysed reaction is L-aspartyl-tRNA(Asn) + L-glutamine + ATP + H2O = L-asparaginyl-tRNA(Asn) + L-glutamate + ADP + phosphate + 2 H(+). In terms of biological role, allows the formation of correctly charged Asn-tRNA(Asn) or Gln-tRNA(Gln) through the transamidation of misacylated Asp-tRNA(Asn) or Glu-tRNA(Gln) in organisms which lack either or both of asparaginyl-tRNA or glutaminyl-tRNA synthetases. The reaction takes place in the presence of glutamine and ATP through an activated phospho-Asp-tRNA(Asn) or phospho-Glu-tRNA(Gln). This is Aspartyl/glutamyl-tRNA(Asn/Gln) amidotransferase subunit B from Methanococcus maripaludis (strain C6 / ATCC BAA-1332).